The following is a 1499-amino-acid chain: Phospholipid-transporting ATPase VA (1499 aa).

The interval 1–53 is disordered; that stretch reads MEREPAGTEEPGPPGRRRRREGRTRTVRSNLLPPPGAEDPAAGAAKGERRRRR. Residues 1–86 are Cytoplasmic-facing; the sequence is MEREPAGTEE…KNLFEQFHRP (86 aa). Residues 15–26 are compositionally biased toward basic residues; the sequence is GRRRRREGRTRT. A helical membrane pass occupies residues 87–106; it reads ANVYFVFIALLNFVPAVNAF. Residues 107 to 110 lie on the Exoplasmic loop side of the membrane; the sequence is QPGL. The chain crosses the membrane as a helical span at residues 111 to 128; sequence ALAPVLFILAITAFRDLW. Topologically, residues 129 to 309 are cytoplasmic; that stretch reads EDYSRHRSDH…SKLERQMNCD (181 aa). A helical transmembrane segment spans residues 310–332; that stretch reads VLWCVLLLVCMSLFSAVGHGLWI. The Exoplasmic loop portion of the chain corresponds to 333-362; sequence WRYQEKKSLFYVPKSDGSSLSPVTAAVYSF. A helical transmembrane segment spans residues 363–384; that stretch reads LTMIIVLQVLIPISLYVSIEIV. The Cytoplasmic segment spans residues 385–1087; the sequence is KACQVYFINQ…GHWCYSRLAN (703 aa). D427 acts as the 4-aspartylphosphate intermediate in catalysis. Residues D427, K428, and T429 each contribute to the ATP site. Residue D427 participates in Mg(2+) binding. Mg(2+) is bound at residue T429. The tract at residues 464–531 is disordered; it reads ADSEEEEVVP…AFSSPMEKDI (68 aa). S466 carries the phosphoserine modification. The segment covering 477 to 499 has biased composition (polar residues); that stretch reads SVSQRGSIGSHQSVRVVHRTQST. ATP contacts are provided by E700, F742, K766, R809, T889, G890, D891, R1005, and K1011. A Mg(2+)-binding site is contributed by D1031. Residues N1034 and D1035 each coordinate ATP. D1035 serves as a coordination point for Mg(2+). Residues 1088-1108 traverse the membrane as a helical segment; sequence MVLYFFYKNTMFVGLLFWFQF. Topologically, residues 1109–1119 are exoplasmic loop; that stretch reads FCGFSASTMID. Residues 1120–1140 traverse the membrane as a helical segment; that stretch reads QWYLIFFNLLFSSLPPLVTGV. Residues 1141–1170 lie on the Cytoplasmic side of the membrane; the sequence is LDRDVPANVLLTNPQLYKSGQNMEEYRPRT. Residues 1171 to 1192 traverse the membrane as a helical segment; it reads FWFNMADAAFQSLVCFSIPYLA. Residues 1193–1199 lie on the Exoplasmic loop side of the membrane; it reads YYDSNVD. The chain crosses the membrane as a helical span at residues 1200–1222; it reads LFTWGTPIVTIALLTFLLHLGIE. Over 1223–1228 the chain is Cytoplasmic; the sequence is TKTWTW. Residues 1229-1249 form a helical membrane-spanning segment; that stretch reads LNWITCGFSVLLFFTVALIYN. The Exoplasmic loop segment spans residues 1250–1267; the sequence is ASCATCYPPSNPYWTMQA. The chain crosses the membrane as a helical span at residues 1268-1292; the sequence is LLGDPVFYLTCLMTPVAALLPRLFF. The Cytoplasmic portion of the chain corresponds to 1293 to 1499; it reads RSLQGRVFPT…LIGASSRRSQ (207 aa). Disordered stretches follow at residues 1311–1356 and 1464–1499; these read TRKS…PSWH and DGQA…RRSQ. Residues 1330-1340 are compositionally biased toward basic and acidic residues; sequence LPKDSGTEHSS. Residues 1341–1356 are compositionally biased toward polar residues; that stretch reads GRTVKTSVPLSQPSWH.

It belongs to the cation transport ATPase (P-type) (TC 3.A.3) family. Type IV subfamily. Component of a P4-ATPase flippase complex which consists of a catalytic alpha subunit ATP10A and an accessory beta subunit TMEM30A. Mg(2+) serves as cofactor. Autophosphorylated at the conserved aspartate of the P-type ATPase signature sequence. Widely expressed, with highest levels in kidney, followed by lung, brain, prostate, testis, ovary and small intestine.

Its subcellular location is the cell membrane. It is found in the endoplasmic reticulum membrane. It carries out the reaction ATP + H2O + phospholipidSide 1 = ADP + phosphate + phospholipidSide 2.. The enzyme catalyses a 1,2-diacyl-sn-glycero-3-phosphocholine(out) + ATP + H2O = a 1,2-diacyl-sn-glycero-3-phosphocholine(in) + ADP + phosphate + H(+). It catalyses the reaction a beta-D-glucosyl-(1&lt;-&gt;1')-N-acylsphing-4-enine(out) + ATP + H2O = a beta-D-glucosyl-(1&lt;-&gt;1')-N-acylsphing-4-enine(in) + ADP + phosphate + H(+). Its activity is regulated as follows. Inhibited under hypotonic conditions. Its function is as follows. Catalytic component of P4-ATPase flippase complex, which catalyzes the hydrolysis of ATP coupled to the transport of phosphatidylcholine (PC) from the outer to the inner leaflet of the plasma membrane. Initiates inward plasma membrane bending and recruitment of Bin/amphiphysin/Rvs (BAR) domain-containing proteins involved in membrane tubulation and cell trafficking. Facilitates ITGB1/beta1 integrin endocytosis, delaying cell adhesion and cell spreading on extracellular matrix. Has low flippase activity toward glucosylceramide (GlcCer). In Homo sapiens (Human), this protein is Phospholipid-transporting ATPase VA.